A 322-amino-acid polypeptide reads, in one-letter code: Ribosomal RNA small subunit methyltransferase H (322 aa).

Residues Gly35 to Tyr37, Asp52, Phe79, Asp100, and Gln107 each bind S-adenosyl-L-methionine. The disordered stretch occupies residues Gly254–Gly322. Over residues Ser295 to Ala309 the composition is skewed to low complexity.

This sequence belongs to the methyltransferase superfamily. RsmH family.

It localises to the cytoplasm. The enzyme catalyses cytidine(1402) in 16S rRNA + S-adenosyl-L-methionine = N(4)-methylcytidine(1402) in 16S rRNA + S-adenosyl-L-homocysteine + H(+). Specifically methylates the N4 position of cytidine in position 1402 (C1402) of 16S rRNA. The chain is Ribosomal RNA small subunit methyltransferase H from Rhizorhabdus wittichii (strain DSM 6014 / CCUG 31198 / JCM 15750 / NBRC 105917 / EY 4224 / RW1) (Sphingomonas wittichii).